A 537-amino-acid polypeptide reads, in one-letter code: Zinc finger protein 835 (537 aa).

Residues 12 to 109 (AELEGNWKHE…RERGGGPKKP (98 aa)) form a disordered region. Polar residues predominate over residues 63-77 (TISSPAATQASVPDD). Residues 89 to 104 (SPKERHPDSRQRERGG) show a composition bias toward basic and acidic residues. 14 consecutive C2H2-type zinc fingers follow at residues 110–132 (WKCG…QRIH), 138–160 (FACP…QRTH), 166–188 (YACH…WRTH), 194–216 (HRCA…RRVH), 222–244 (YACA…QRIH), 250–272 (YECS…QRIH), 278–300 (YRCG…RRVH), 306–328 (YTCQ…RRIH), 334–356 (YACG…QRTH), 362–384 (YPCH…RLVH), 390–412 (YRCL…QKIH), 418–440 (YKCG…QRTH), 446–468 (YTCP…HIVH), and 474–496 (YECS…QRTH). The tract at residues 497-537 (ADSSGRLCPAPTPDSTPGLSQGGETCQQGCPGRNPRGPAED) is disordered. The span at 509-524 (PDSTPGLSQGGETCQQ) shows a compositional bias: polar residues.

The protein belongs to the krueppel C2H2-type zinc-finger protein family.

It localises to the nucleus. Its function is as follows. May be involved in transcriptional regulation. In Homo sapiens (Human), this protein is Zinc finger protein 835 (ZNF835).